A 322-amino-acid polypeptide reads, in one-letter code: Transcription factor WRKY45-2 (322 aa).

The segment at glycine 67 to asparagine 110 is disordered. Residues valine 112 to proline 180 constitute a DNA-binding region (WRKY). Residues serine 256 to aspartate 284 are disordered.

Belongs to the WRKY group III family. As to expression, expressed in aleurone cells.

It localises to the nucleus. Its function is as follows. Transcriptional activator involved in defense responses against pathogens. Acts as a positive regulator of defense responses against the rice blast fungus Magnaporthe oryzae. Acts as a positive regulator of defense responses against the bacterial blight Xanthomonas oryzae pv oryzae (Xoo) and the bacterial streak Xanthomonas oryzae pv oryzicola (Xoc). Acts as a positive regulator of abscisic acid (ABA) signaling that suppresses growth of seedlings. Acts as a negative regulator of salt stress response. Acts as a negative regulator of cold stress response. Acts as a negative regulator of drought stress response. The sequence is that of Transcription factor WRKY45-2 from Oryza sativa subsp. indica (Rice).